The following is a 364-amino-acid chain: DNA polymerase IV (364 aa).

Residues 7–187 form the UmuC domain; the sequence is IIHVDMDAFY…LPVNRVPGVG (181 aa). Residues aspartate 11 and aspartate 105 each coordinate Mg(2+). Residue glutamate 106 is part of the active site.

Belongs to the DNA polymerase type-Y family. Monomer. Mg(2+) serves as cofactor.

The protein resides in the cytoplasm. It carries out the reaction DNA(n) + a 2'-deoxyribonucleoside 5'-triphosphate = DNA(n+1) + diphosphate. Functionally, poorly processive, error-prone DNA polymerase involved in untargeted mutagenesis. Copies undamaged DNA at stalled replication forks, which arise in vivo from mismatched or misaligned primer ends. These misaligned primers can be extended by PolIV. Exhibits no 3'-5' exonuclease (proofreading) activity. May be involved in translesional synthesis, in conjunction with the beta clamp from PolIII. This Stenotrophomonas maltophilia (strain K279a) protein is DNA polymerase IV.